Here is a 523-residue protein sequence, read N- to C-terminus: Occludin (523 aa).

The tract at residues Met-1–Asn-20 is disordered. The Cytoplasmic portion of the chain corresponds to Met-1–Arg-66. One can recognise an MARVEL domain in the interval Ser-60 to Arg-269. A helical membrane pass occupies residues Ile-67 to Leu-87. The Extracellular portion of the chain corresponds to Ala-88–Phe-140. A helical transmembrane segment spans residues Leu-141–Ile-161. The Cytoplasmic portion of the chain corresponds to Arg-162–Leu-173. A helical membrane pass occupies residues Ile-174 to Ile-194. Residues Met-195–Ala-244 are Extracellular-facing. A disulfide bridge links Cys-216 with Cys-237. A helical membrane pass occupies residues Ile-245 to Val-265. Residues Lys-266–Thr-523 lie on the Cytoplasmic side of the membrane. Ser-302 bears the Phosphoserine mark. The segment at Ser-302–Pro-338 is disordered. Thr-305 carries the phosphothreonine modification. Residues Ser-313, Ser-321, Ser-340, and Ser-360 each carry the phosphoserine modification. The disordered stretch occupies residues Asp-363–Glu-408. Residues Arg-368–Arg-381 are compositionally biased toward polar residues. Tyr-369 bears the Phosphotyrosine mark. Residues Ser-370 and Ser-371 each carry the phosphoserine modification. Residues Thr-382–Ala-391 show a composition bias toward basic residues. The span at Lys-392–Thr-401 shows a compositional bias: basic and acidic residues. A phosphotyrosine mark is found at Tyr-399 and Tyr-403. Residues Thr-404 and Thr-405 each carry the phosphothreonine; by PKC/PRKCH modification. Ser-409 carries the phosphoserine modification. Residues Glu-415–Thr-523 enclose the OCEL domain. The stretch at Tyr-433–Lys-489 forms a coiled coil. Ser-491 carries the phosphoserine modification.

Belongs to the ELL/occludin family. As to quaternary structure, interacts with TJP1/ZO1. Interacts with VAPA. Interacts with CLDN1, CLDN6, CLDN9, CLDN11, CLDN12 and CLDN17. Interacts with PLSCR1. Interacts with LSR, ILDR1 and ILDR2. Interacts with TJP2/ZO2. In terms of processing, dephosphorylated by PTPRJ.

It is found in the cell membrane. The protein localises to the cell junction. Its subcellular location is the tight junction. Functionally, may play a role in the formation and regulation of the tight junction (TJ) paracellular permeability barrier. May be involved in the organization of actin in endothelial cells. The chain is Occludin (Ocln) from Rattus norvegicus (Rat).